A 440-amino-acid chain; its full sequence is Proline--tRNA ligase (440 aa).

Belongs to the class-II aminoacyl-tRNA synthetase family. ProS type 2 subfamily. As to quaternary structure, homodimer.

The protein resides in the cytoplasm. It carries out the reaction tRNA(Pro) + L-proline + ATP = L-prolyl-tRNA(Pro) + AMP + diphosphate. Its function is as follows. Catalyzes the attachment of proline to tRNA(Pro) in a two-step reaction: proline is first activated by ATP to form Pro-AMP and then transferred to the acceptor end of tRNA(Pro). This is Proline--tRNA ligase from Agrobacterium fabrum (strain C58 / ATCC 33970) (Agrobacterium tumefaciens (strain C58)).